The following is a 475-amino-acid chain: Maintenance of mitochondrial morphology protein 1 (475 aa).

Over 1–14 (MSETFSPNLTFTEG) the chain is Lumenal. A helical membrane pass occupies residues 15–35 (FVLGQASFLIILLLFIRYVVF). The Cytoplasmic segment spans residues 36–475 (SPSEQIDHEG…VTPGQVGTSR (440 aa)). Positions 80 to 278 (PAESSDWVNV…HPNHISLALP (199 aa)) constitute an SMP-LTD domain. Disordered regions lie at residues 321-381 (NPVE…GQPQ) and 394-475 (SYPH…GTSR). The segment covering 341–351 (PPTPLVQPPGT) has biased composition (pro residues). 2 stretches are compositionally biased toward polar residues: residues 353–380 (PTLS…QGQP) and 394–403 (SYPHYNTYTL). Residues 442-464 (STTSSLTPSQSQSQFRFRGQFAS) show a composition bias toward low complexity.

It belongs to the MMM1 family. Homodimer. Component of the ER-mitochondria encounter structure (ERMES) or MDM complex, composed of MMM1, MDM10, MDM12 and MDM34. An MMM1 homodimer associates with one molecule of MDM12 on each side in a pairwise head-to-tail manner, and the SMP-LTD domains of MMM1 and MDM12 generate a continuous hydrophobic tunnel for phospholipid trafficking.

The protein localises to the endoplasmic reticulum membrane. Functionally, component of the ERMES/MDM complex, which serves as a molecular tether to connect the endoplasmic reticulum (ER) and mitochondria. Components of this complex are involved in the control of mitochondrial shape and protein biogenesis, and function in nonvesicular lipid trafficking between the ER and mitochondria. The MDM12-MMM1 subcomplex functions in the major beta-barrel assembly pathway that is responsible for biogenesis of all outer membrane beta-barrel proteins, and acts in a late step after the SAM complex. The MDM10-MDM12-MMM1 subcomplex further acts in the TOM40-specific pathway after the action of the MDM12-MMM1 complex. Essential for establishing and maintaining the structure of mitochondria and maintenance of mtDNA nucleoids. This chain is Maintenance of mitochondrial morphology protein 1, found in Cryptococcus neoformans var. neoformans serotype D (strain B-3501A) (Filobasidiella neoformans).